Here is a 141-residue protein sequence, read N- to C-terminus: Large ribosomal subunit protein uL23B (141 aa).

Residues 1–22 (MSVGKAKGAQKTVQKGIHNKVA) are disordered.

Belongs to the universal ribosomal protein uL23 family. In terms of assembly, component of the large ribosomal subunit (LSU). Mature yeast ribosomes consist of a small (40S) and a large (60S) subunit. The 40S small subunit contains 1 molecule of ribosomal RNA (18S rRNA) and at least 33 different proteins. The large 60S subunit contains 3 rRNA molecules (25S, 5.8S and 5S rRNA) and at least 46 different proteins. uL23 is associated with the polypeptide exit tunnel.

The protein resides in the cytoplasm. This protein binds to a specific region on the 26S rRNA. Its function is as follows. Component of the ribosome, a large ribonucleoprotein complex responsible for the synthesis of proteins in the cell. The small ribosomal subunit (SSU) binds messenger RNAs (mRNAs) and translates the encoded message by selecting cognate aminoacyl-transfer RNA (tRNA) molecules. The large subunit (LSU) contains the ribosomal catalytic site termed the peptidyl transferase center (PTC), which catalyzes the formation of peptide bonds, thereby polymerizing the amino acids delivered by tRNAs into a polypeptide chain. The nascent polypeptides leave the ribosome through a tunnel in the LSU and interact with protein factors that function in enzymatic processing, targeting, and the membrane insertion of nascent chains at the exit of the ribosomal tunnel. uL23 is a major component of the universal docking site for these factors at the polypeptide exit tunnel. This chain is Large ribosomal subunit protein uL23B (rpl2502), found in Schizosaccharomyces pombe (strain 972 / ATCC 24843) (Fission yeast).